The chain runs to 566 residues: SRSF protein kinase 3 (566 aa).

Positions 1-13 are enriched in gly residues; it reads MSASTGGGGGGDS. The disordered stretch occupies residues 1-60; sequence MSASTGGGGGGDSGSSSSSSSQASCGPEPSGSELAPPTPAPRMLQGLLGSDDEEQEDPKD. The segment covering 14-26 has biased composition (low complexity); the sequence is GSSSSSSSQASCG. Serine 50 carries the phosphoserine modification. Residues 79–564 form the Protein kinase domain; that stretch reads YHVVRKLGWG…AADCLQHPWL (486 aa). Residues 85–93 and lysine 108 contribute to the ATP site; that span reads LGWGHFSTV. The active-site Proton acceptor is the aspartate 212. A compositionally biased stretch (polar residues) spans 236–254; it reads EWQQSGAPPPSRSTVSTAP. Disordered stretches follow at residues 236–283 and 295–353; these read EWQQ…LLEE and EAAA…SGFS. A compositionally biased stretch (basic residues) spans 263–278; sequence SKNKRKKMRRKRKQQK. Serine 329 carries the phosphoserine modification. Residues 330–339 are compositionally biased toward low complexity; that stretch reads PASSSPAPGG. The span at 344–353 shows a compositional bias: polar residues; it reads SPGSQTSGFS.

This sequence belongs to the protein kinase superfamily. As to expression, highly expressed in skeletal muscle, heart, uterus and parorchis. Weakly expressed in brain, stomach, small intestine and ovary.

It is found in the nucleus. The protein localises to the cytoplasm. The enzyme catalyses L-seryl-[protein] + ATP = O-phospho-L-seryl-[protein] + ADP + H(+). It catalyses the reaction L-threonyl-[protein] + ATP = O-phospho-L-threonyl-[protein] + ADP + H(+). Its function is as follows. Serine/arginine-rich protein-specific kinase which specifically phosphorylates its substrates at serine residues located in regions rich in arginine/serine dipeptides, known as RS domains. Phosphorylates the SR splicing factor SRSF1 and the lamin-B receptor (LBR) in vitro. Required for normal muscle development. The protein is SRSF protein kinase 3 (SRPK3) of Sus scrofa (Pig).